The sequence spans 334 residues: N-acetyl-gamma-glutamyl-phosphate reductase (334 aa).

Residue Cys142 is part of the active site.

It belongs to the NAGSA dehydrogenase family. Type 1 subfamily.

The protein resides in the cytoplasm. It carries out the reaction N-acetyl-L-glutamate 5-semialdehyde + phosphate + NADP(+) = N-acetyl-L-glutamyl 5-phosphate + NADPH + H(+). It participates in amino-acid biosynthesis; L-arginine biosynthesis; N(2)-acetyl-L-ornithine from L-glutamate: step 3/4. Catalyzes the NADPH-dependent reduction of N-acetyl-5-glutamyl phosphate to yield N-acetyl-L-glutamate 5-semialdehyde. The polypeptide is N-acetyl-gamma-glutamyl-phosphate reductase (Pelodictyon phaeoclathratiforme (strain DSM 5477 / BU-1)).